The chain runs to 479 residues: Ribulose bisphosphate carboxylase large chain (479 aa).

A propeptide spanning residues 1–2 (MS) is cleaved from the precursor. Substrate-binding residues include N123 and T173. K175 functions as the Proton acceptor in the catalytic mechanism. K177 contacts substrate. Positions 201, 203, and 204 each coordinate Mg(2+). Residue K201 is modified to N6-carboxylysine. S208 is subject to Phosphoserine. The active-site Proton acceptor is H294. 2 residues coordinate substrate: R295 and H327. T330 is subject to Phosphothreonine. Residue S379 coordinates substrate.

It belongs to the RuBisCO large chain family. Type I subfamily. As to quaternary structure, heterohexadecamer of 8 large chains and 8 small chains; disulfide-linked. The disulfide link is formed within the large subunit homodimers. Mg(2+) is required as a cofactor. The disulfide bond which can form in the large chain dimeric partners within the hexadecamer appears to be associated with oxidative stress and protein turnover.

It localises to the plastid. Its subcellular location is the chloroplast. It catalyses the reaction 2 (2R)-3-phosphoglycerate + 2 H(+) = D-ribulose 1,5-bisphosphate + CO2 + H2O. The enzyme catalyses D-ribulose 1,5-bisphosphate + O2 = 2-phosphoglycolate + (2R)-3-phosphoglycerate + 2 H(+). In terms of biological role, ruBisCO catalyzes two reactions: the carboxylation of D-ribulose 1,5-bisphosphate, the primary event in carbon dioxide fixation, as well as the oxidative fragmentation of the pentose substrate in the photorespiration process. Both reactions occur simultaneously and in competition at the same active site. This Crucihimalaya wallichii (Rock-cress) protein is Ribulose bisphosphate carboxylase large chain.